A 922-amino-acid chain; its full sequence is Translation initiation factor IF-2 (922 aa).

Positions 243–329 are disordered; sequence AAREAAKLAE…GKSKSGQEET (87 aa). Residues 250–264 show a composition bias toward low complexity; sequence LAEAQKAAAPAPAAP. Basic and acidic residues predominate over residues 267–298; that stretch reads KTLHKPDKPAAAKGAKGPDKKPAGAWKDDAAR. The tr-type G domain occupies 422–589; the sequence is ARPPVVTVMG…AILLQAEVLE (168 aa). The segment at 431-438 is G1; it reads GHVDHGKT. 431–438 serves as a coordination point for GTP; it reads GHVDHGKT. The interval 456–460 is G2; the sequence is GITQH. The tract at residues 477–480 is G3; that stretch reads DTPG. GTP contacts are provided by residues 477–481 and 531–534; these read DTPGH and NKID. The segment at 531–534 is G4; that stretch reads NKID. Residues 567-569 form a G5 region; sequence SAK.

This sequence belongs to the TRAFAC class translation factor GTPase superfamily. Classic translation factor GTPase family. IF-2 subfamily.

It is found in the cytoplasm. Functionally, one of the essential components for the initiation of protein synthesis. Protects formylmethionyl-tRNA from spontaneous hydrolysis and promotes its binding to the 30S ribosomal subunits. Also involved in the hydrolysis of GTP during the formation of the 70S ribosomal complex. The protein is Translation initiation factor IF-2 of Thiobacillus denitrificans (strain ATCC 25259 / T1).